The primary structure comprises 373 residues: Leucine aminopeptidase 1 (373 aa).

The signal sequence occupies residues 1 to 18 (MKLLSVLALSATATSVLG). A glycan (N-linked (GlcNAc...) asparagine) is linked at asparagine 136. Zn(2+)-binding residues include histidine 176 and aspartate 195. Asparagine 196 is a glycosylation site (N-linked (GlcNAc...) asparagine). Glutamate 234 and aspartate 261 together coordinate Zn(2+). Asparagine 284 is a glycosylation site (N-linked (GlcNAc...) asparagine). A disulfide bond links cysteine 310 and cysteine 314. Histidine 343 provides a ligand contact to Zn(2+).

This sequence belongs to the peptidase M28 family. M28E subfamily. Monomer. Zn(2+) is required as a cofactor.

Its subcellular location is the secreted. Functionally, extracellular aminopeptidase which contributes to pathogenicity. This is Leucine aminopeptidase 1 (LAP1) from Trichophyton equinum (Horse ringworm fungus).